Reading from the N-terminus, the 170-residue chain is uncharacterized protein (170 aa).

The first 26 residues, 1–26 (MLKKKWMVGLLAGCLAAGGFSYNAFA), serve as a signal peptide directing secretion.

This is an uncharacterized protein from Bacillus subtilis (strain 168).